The chain runs to 1291 residues: Capping protein-inhibiting regulator of actin dynamics (1291 aa).

Phosphoserine occurs at positions 7 and 28. 6 disordered regions span residues 48–71 (KFGQ…SSEE), 84–137 (QQDI…AGTI), 159–221 (HKLA…HEEK), 234–253 (KCKR…EQRR), 267–663 (QELL…ASHA), and 701–1238 (LGLS…TSVT). Serine 132 is modified (phosphoserine). The span at 159 to 176 (HKLAVKPKNQRVSRKHRW) shows a compositional bias: basic residues. A compositionally biased stretch (polar residues) spans 184–199 (EPGSFESQSSLDQNGQ). The segment covering 201-221 (GEDKHIWHGEEPEPLESHEEK) has biased composition (basic and acidic residues). Acidic residues predominate over residues 270–291 (LEEEEEGEEEEEVKEEGEEGEE). Basic and acidic residues-rich tracts occupy residues 302 to 318 (PPEE…RCTE), 326 to 461 (DPAR…EDAK), and 470 to 483 (EAKR…KETP). Residues 324 to 560 (ADDPARLEAE…DLDAHCGGVD (237 aa)) form a required for interaction with actin-capping proteins region. Threonine 482 is subject to Phosphothreonine. Phosphoserine occurs at positions 493 and 510. Basic and acidic residues-rich tracts occupy residues 506–527 (ADQR…REDL) and 534–543 (EIAEEPRGEG). Residues 580–593 (EGTPAPEENEATAA) are compositionally biased toward low complexity. Over residues 594–612 (DIDRKVEELRWQEVDERQT) the composition is skewed to basic and acidic residues. Serine 636 is subject to Phosphoserine. Phosphothreonine is present on threonine 639. Residues 749–778 (KNSEGDQRGDREPARAGDEPVPRARCDSRG) are compositionally biased toward basic and acidic residues. Serine 867 bears the Phosphoserine mark. Over residues 875 to 888 (TESTTTLDSETTSD) the composition is skewed to low complexity. A compositionally biased stretch (basic and acidic residues) spans 969–983 (QERKPALSPRKDSAE). Threonine 1033 is modified (phosphothreonine). At serine 1037 the chain carries Phosphoserine. Over residues 1056–1070 (GKLDSEPSETAKESS) the composition is skewed to basic and acidic residues. Serine 1076 is modified (phosphoserine). 3 stretches are compositionally biased toward basic and acidic residues: residues 1081-1098 (EELK…EKKP), 1117-1141 (TGRK…EKVE), and 1157-1182 (GFRE…KLSK). Polar residues-rich tracts occupy residues 1183-1197 (ETVS…SRAS) and 1229-1238 (KSNTLPTSVT).

Directly interacts with actin-capping proteins CAPZA1, CAPZA2 and CAPZB; this interaction decreases the binding of capping proteins to actin. In terms of tissue distribution, expressed in the small intestine (at protein level).

Its subcellular location is the cytoplasm. The protein resides in the cytosol. Functionally, involved in epithelial cell integrity by acting on the dynamics of the actin cytoskeleton. Positively regulates the actin polymerization, by inhibiting the interaction of actin-capping proteins with actin. The chain is Capping protein-inhibiting regulator of actin dynamics from Mus musculus (Mouse).